Reading from the N-terminus, the 130-residue chain is Methylglyoxal synthase (130 aa).

The MGS-like domain occupies 1 to 130 (MSKPRIALIA…DLARTMQDVC (130 aa)). Residues His-11, Lys-15, 37–40 (TGTT), and 57–58 (SG) contribute to the substrate site. Residue Asp-63 is the Proton donor/acceptor of the active site. His-90 contributes to the substrate binding site.

Belongs to the methylglyoxal synthase family.

The catalysed reaction is dihydroxyacetone phosphate = methylglyoxal + phosphate. In terms of biological role, catalyzes the formation of methylglyoxal from dihydroxyacetone phosphate. The polypeptide is Methylglyoxal synthase (Burkholderia multivorans (strain ATCC 17616 / 249)).